A 258-amino-acid chain; its full sequence is (S)-hydroxynitrile lyase (258 aa).

Residues His-5–Lys-242 enclose the AB hydrolase-1 domain. 2-hydroxy-2-methylpropanenitrile is bound by residues Thr-11 and Ser-80. Acetone is bound by residues Thr-11, Ser-80, and Cys-81. Ser-80 acts as the Proton donor/acceptor in catalysis. His-236 (proton donor/acceptor) is an active-site residue.

Belongs to the AB hydrolase superfamily. Hydroxynitrile lyase family. In terms of assembly, homotetramer.

It carries out the reaction a monosubstituted aliphatic (S)-hydroxynitrile = an aldehyde + hydrogen cyanide. The enzyme catalyses a disubstituted aliphatic (S)-hydroxynitrile = a ketone + hydrogen cyanide. It catalyses the reaction an aromatic (S)-hydroxynitrile = an aromatic aldehyde + hydrogen cyanide. The catalysed reaction is 2-hydroxy-2-methylpropanenitrile = acetone + hydrogen cyanide. It carries out the reaction butan-2-one + hydrogen cyanide = 2-hydroxy-2-methylbutanenitrile. The enzyme catalyses pentan-2-one + hydrogen cyanide = (2S)-2-hydroxy-2-methylpentanenitrile. It catalyses the reaction hexan-2-one + hydrogen cyanide = (2S)-2-hydroxy-2-methylhexanenitrile. The catalysed reaction is heptan-2-one + hydrogen cyanide = (2S)-2-hydroxy-2-methylheptanenitrile. It carries out the reaction 4-methylpentan-2-one + hydrogen cyanide = (2S)-2-hydroxy-2,4-dimethylpentanenitrile. The enzyme catalyses 3,3-dimethylbutan-2-one + hydrogen cyanide = (2S)-2-hydroxy-2-methyl-3,3-dimethylbutanenitrile. It catalyses the reaction acetophenone + hydrogen cyanide = (2S)-2-hydroxy-2-phenylpropanenitrile. The catalysed reaction is propanal + hydrogen cyanide = (2S)-2-hydroxybutanenitrile. It carries out the reaction pentanal + hydrogen cyanide = (2S)-2-hydroxyhexanenitrile. The enzyme catalyses 2-methylpropanal + hydrogen cyanide = (2S)-2-hydroxy-3-methylbutanenitrile. It catalyses the reaction 2,2-dimethylpropanal + hydrogen cyanide = (2S)-2-hydroxy-3,3-dimethylbutanenitrile. The catalysed reaction is acrolein + hydrogen cyanide = (2S)-2-hydroxybut-3-enenitrile. It carries out the reaction (2E)-but-2-enal + hydrogen cyanide = (2S,3E)-2-hydroxypent-3-enenitrile. The enzyme catalyses (E)-hex-2-enal + hydrogen cyanide = (2S,3E)-2-hydroxyhept-3-enenitrile. It catalyses the reaction cyclohexanecarbaldehyde + hydrogen cyanide = (2S)-2-cyclohexyl-2-hydroxyacetonitrile. The catalysed reaction is benzaldehyde + hydrogen cyanide = (S)-mandelonitrile. It carries out the reaction 4-methoxybenzaldehyde + hydrogen cyanide = (2S)-2-hydroxy-2-(4-methoxyphenyl)acetonitrile. The enzyme catalyses piperonal + hydrogen cyanide = (2S)-2-(2H-1,3-benzodioxol-5-yl)-2-hydroxyacetonitrile. It catalyses the reaction formylthiophene + hydrogen cyanide = (2R)-2-hydroxy-2-(thiophen-2-yl)acetonitrile. The catalysed reaction is 3-formylthiophene + hydrogen cyanide = (2S)-2-hydroxy-2-(thiophen-3-yl)acetonitrile. It carries out the reaction furan-3-carbaldehyde + hydrogen cyanide = (2S)-2-(furan-3-yl)-2-hydroxyacetonitrile. Involved in cyanogenesis, the release of HCN from cyanogenic glycosides in injured tissues; the release of toxic HCN is believed to play a central role in the defense mechanism of plants against herbivores and microbial attack. Decomposes a variety of cyanohydrins (alpha-hydroxynitriles) into HCN and the corresponding aldehydes or ketones; two natural substrates are 2-hydroxy-2-methylpropanenitrile (acetone cyanohydrin) and 2-hydroxy-2-methylbutanenitrile (2-butanone cyanohydrin), but in vitro can also act on 2-hydroxy-2-methylpentanenitrile (2-pentanone cyanohydrin) and mandelonitrile. Is also able to catalyze the reverse reaction in vitro, leading to the stereospecific synthesis of aliphatic, aromatic, and heterocyclic cyanohydrins, important intermediates in the production of various agrochemicals or pharmaceuticals. The protein is (S)-hydroxynitrile lyase of Manihot esculenta (Cassava).